A 221-amino-acid polypeptide reads, in one-letter code: Ribosomal RNA small subunit methyltransferase Nep1 (221 aa).

Residues Gly174, Gly179, and Ile196–Met201 each bind S-adenosyl-L-methionine.

It belongs to the class IV-like SAM-binding methyltransferase superfamily. RNA methyltransferase NEP1 family. In terms of assembly, homodimer.

It catalyses the reaction a pseudouridine in rRNA + S-adenosyl-L-methionine = an N(1)-methylpseudouridine in rRNA + S-adenosyl-L-homocysteine + H(+). Its function is as follows. Methyltransferase involved in ribosomal biogenesis. Specifically catalyzes the N1-methylation of the pseudouridine corresponding to position 914 in M.jannaschii 16S rRNA. The polypeptide is Ribosomal RNA small subunit methyltransferase Nep1 (Pyrobaculum islandicum (strain DSM 4184 / JCM 9189 / GEO3)).